We begin with the raw amino-acid sequence, 494 residues long: Glutamyl-tRNA(Gln) amidotransferase subunit A (494 aa).

Active-site charge relay system residues include Lys81 and Ser156. Ser180 (acyl-ester intermediate) is an active-site residue.

This sequence belongs to the amidase family. GatA subfamily. As to quaternary structure, heterotrimer of A, B and C subunits.

The enzyme catalyses L-glutamyl-tRNA(Gln) + L-glutamine + ATP + H2O = L-glutaminyl-tRNA(Gln) + L-glutamate + ADP + phosphate + H(+). In terms of biological role, allows the formation of correctly charged Gln-tRNA(Gln) through the transamidation of misacylated Glu-tRNA(Gln) in organisms which lack glutaminyl-tRNA synthetase. The reaction takes place in the presence of glutamine and ATP through an activated gamma-phospho-Glu-tRNA(Gln). The polypeptide is Glutamyl-tRNA(Gln) amidotransferase subunit A (Mycobacterium tuberculosis (strain ATCC 25177 / H37Ra)).